Reading from the N-terminus, the 191-residue chain is Large ribosomal subunit protein eL6 (191 aa).

Belongs to the eukaryotic ribosomal protein eL6 family.

In Tetrahymena thermophila (strain SB210), this protein is Large ribosomal subunit protein eL6 (RPL6).